The following is a 209-amino-acid chain: Uracil phosphoribosyltransferase (209 aa).

Residues R79, R104, and 131-139 (DPMLATGGS) contribute to the 5-phospho-alpha-D-ribose 1-diphosphate site. Uracil-binding positions include I194 and 199–201 (GDA). Residue D200 participates in 5-phospho-alpha-D-ribose 1-diphosphate binding.

The protein belongs to the UPRTase family. Mg(2+) serves as cofactor.

It catalyses the reaction UMP + diphosphate = 5-phospho-alpha-D-ribose 1-diphosphate + uracil. Its pathway is pyrimidine metabolism; UMP biosynthesis via salvage pathway; UMP from uracil: step 1/1. Allosterically activated by GTP. Catalyzes the conversion of uracil and 5-phospho-alpha-D-ribose 1-diphosphate (PRPP) to UMP and diphosphate. The protein is Uracil phosphoribosyltransferase of Clostridium botulinum (strain Alaska E43 / Type E3).